The sequence spans 103 residues: Small ribosomal subunit protein uS10 (103 aa).

It belongs to the universal ribosomal protein uS10 family. Part of the 30S ribosomal subunit.

Involved in the binding of tRNA to the ribosomes. In Idiomarina loihiensis (strain ATCC BAA-735 / DSM 15497 / L2-TR), this protein is Small ribosomal subunit protein uS10.